The primary structure comprises 164 residues: V-type proton ATPase subunit c' (164 aa).

Over M1–Y14 the chain is Vacuolar. The helical transmembrane segment at A15–G37 threads the bilayer. The Cytoplasmic segment spans residues T38–S59. Residues L60–I80 traverse the membrane as a helical segment. At A81 to H98 the chain is on the vacuolar side. Residues L99–G120 traverse the membrane as a helical segment. At D121–R132 the chain is on the cytoplasmic side. The helical transmembrane segment at L133–L158 threads the bilayer. Topologically, residues N159–E164 are vacuolar.

It belongs to the V-ATPase proteolipid subunit family. In terms of assembly, V-ATPase is a heteromultimeric enzyme composed of a peripheral catalytic V1 complex (components A to H) attached to an integral membrane V0 proton pore complex (components: a, c, c', c'', d, e, f and VOA1). The decameric c-ring forms the proton-conducting pore, and is composed of eight proteolipid subunits c, one subunit c' and one subunit c''.

It is found in the vacuole membrane. Functionally, proton-conducting pore forming subunit of the V0 complex of vacuolar(H+)-ATPase (V-ATPase), a multisubunit enzyme composed of a peripheral complex (V1) that hydrolyzes ATP and a membrane integral complex (V0) that translocates protons. V-ATPase is responsible for acidifying and maintaining the pH of intracellular compartments. The chain is V-type proton ATPase subunit c' (VMA11) from Saccharomyces cerevisiae (strain ATCC 204508 / S288c) (Baker's yeast).